The sequence spans 834 residues: WW domain-containing adapter protein with coiled-coil homolog (834 aa).

3 disordered regions span residues 1–247 (MVMH…WSEH), 268–411 (KPKE…SVAT), and 430–504 (VTGA…GAKG). Residues 22 to 31 (HTSYQSSKYS) are compositionally biased toward low complexity. Over residues 33–50 (SKRDYERDRSSNYRDRDL) the composition is skewed to basic and acidic residues. Over residues 53-77 (GAGGGGGGGSAGGGGGGSGNGGGPL) the composition is skewed to gly residues. Positions 96-108 (RSHDLRDRSDHRG) are enriched in basic and acidic residues. The span at 109 to 119 (GGGGNGRGGSG) shows a compositional bias: gly residues. 3 stretches are compositionally biased toward basic and acidic residues: residues 127 to 168 (KMRD…DRRG), 181 to 246 (SSRE…DWSE), and 268 to 303 (KPKEWVDRERNLPRDQHREKDYRDKDRDRDRDDRFS). The WW domain maps to 244–271 (WSEHVSSSGKMYYYNCKTEISQWEKPKE). 2 stretches are compositionally biased toward polar residues: residues 304 to 314 (RSTYKHSNSSR) and 350 to 363 (GDSTPTSEASYSLS). A compositionally biased stretch (gly residues) spans 369 to 384 (HGGGPGGGGPGGGGGS). Composition is skewed to low complexity over residues 402–411 (TANSSASVAT) and 431–466 (TGATMLPTMSGMLNSNSSNSAGGSSSNASSSSLRNS). Residues 472–496 (GSTSGTTVPTLGSQDPHQHHLNSNA) show a composition bias toward polar residues.

Expressed in adult head and thorax and in larval central nervous system and fat body.

Its subcellular location is the nucleus. The protein localises to the lysosome. In terms of biological role, acts as a linker between gene transcription and histone H2B monoubiquitination at 'Lys-118'. Regulates the cell-cycle checkpoint activation in response to DNA damage. Positive regulator of amino acid starvation-induced autophagy. Also acts as a negative regulator of basal autophagy. Positively regulates mTor activity. Promotes, in an energy-dependent manner, the assembly of the TTT complex and the RUVBL complex composed of pont and rept into the TTT-RUVBL complex. This leads to dimerization of the mTORC1 complex and its subsequent activation. May negatively regulate the ubiquitin proteasome pathway. Required for habituation, a form of non-associative learning. This chain is WW domain-containing adapter protein with coiled-coil homolog, found in Drosophila melanogaster (Fruit fly).